A 282-amino-acid chain; its full sequence is Bis(5'-nucleosyl)-tetraphosphatase, symmetrical (282 aa).

The protein belongs to the Ap4A hydrolase family.

The catalysed reaction is P(1),P(4)-bis(5'-adenosyl) tetraphosphate + H2O = 2 ADP + 2 H(+). In terms of biological role, hydrolyzes diadenosine 5',5'''-P1,P4-tetraphosphate to yield ADP. The sequence is that of Bis(5'-nucleosyl)-tetraphosphatase, symmetrical from Salmonella agona (strain SL483).